The chain runs to 300 residues: GTPase Era (300 aa).

The 169-residue stretch at 4–172 (KSGFVALAGK…LEKIKEELPE (169 aa)) folds into the Era-type G domain. A G1 region spans residues 12-19 (GKPNVGKS). Position 12–19 (12–19 (GKPNVGKS)) interacts with GTP. Positions 38-42 (QTTRN) are G2. Residues 59–62 (DTPG) form a G3 region. GTP-binding positions include 59 to 63 (DTPGI) and 121 to 124 (NKID). Residues 121 to 124 (NKID) form a G4 region. Residues 151 to 153 (ISA) are G5. Residues 195–280 (IREKIFHLTR…YLDLNVKVKE (86 aa)) form the KH type-2 domain.

It belongs to the TRAFAC class TrmE-Era-EngA-EngB-Septin-like GTPase superfamily. Era GTPase family. As to quaternary structure, monomer.

The protein localises to the cytoplasm. It localises to the cell inner membrane. An essential GTPase that binds both GDP and GTP, with rapid nucleotide exchange. Plays a role in 16S rRNA processing and 30S ribosomal subunit biogenesis and possibly also in cell cycle regulation and energy metabolism. The sequence is that of GTPase Era from Thermotoga petrophila (strain ATCC BAA-488 / DSM 13995 / JCM 10881 / RKU-1).